Here is a 134-residue protein sequence, read N- to C-terminus: Arsenate reductase (134 aa).

Catalysis depends on nucleophile residues Cys11, Cys83, and Cys90. 2 cysteine pairs are disulfide-bonded: Cys11-Cys83 and Cys83-Cys90.

This sequence belongs to the low molecular weight phosphotyrosine protein phosphatase family. Thioredoxin-coupled ArsC subfamily.

The protein localises to the cytoplasm. The enzyme catalyses arsenate + [thioredoxin]-dithiol + H(+) = arsenite + [thioredoxin]-disulfide + H2O. In terms of biological role, catalyzes the reduction of arsenate [As(V)] to arsenite [As(III)]. This Bacillus anthracis (strain A0248) protein is Arsenate reductase.